We begin with the raw amino-acid sequence, 98 residues long: Small ribosomal subunit protein bS6 (98 aa).

This sequence belongs to the bacterial ribosomal protein bS6 family.

Its function is as follows. Binds together with bS18 to 16S ribosomal RNA. In Staphylococcus epidermidis (strain ATCC 35984 / DSM 28319 / BCRC 17069 / CCUG 31568 / BM 3577 / RP62A), this protein is Small ribosomal subunit protein bS6.